A 58-amino-acid polypeptide reads, in one-letter code: MATIKVTQTKSSIGRLPKHKATLRGLGLRRINHTVELEDTPCIRGMINKVYYMVKVEE.

The protein belongs to the universal ribosomal protein uL30 family. In terms of assembly, part of the 50S ribosomal subunit.

In Vibrio vulnificus (strain CMCP6), this protein is Large ribosomal subunit protein uL30.